We begin with the raw amino-acid sequence, 321 residues long: ATP-dependent 6-phosphofructokinase (321 aa).

An ATP-binding site is contributed by G12. Residues 22 to 26 and 55 to 60 contribute to the ADP site; these read RGVVR and RYSVSD. ATP is bound by residues 73 to 74 and 103 to 106; these read RF and GDGS. D104 lines the Mg(2+) pocket. 127–129 contacts substrate; that stretch reads TID. The Proton acceptor role is filled by D129. R156 provides a ligand contact to ADP. Substrate is bound by residues R164 and 171-173; that span reads MGR. ADP-binding positions include 187–189 and 215–217; these read GCE and KRH. Residues E224, R245, and 251–254 each bind substrate; that span reads HVQR.

Belongs to the phosphofructokinase type A (PFKA) family. ATP-dependent PFK group I subfamily. Prokaryotic clade 'B1' sub-subfamily. In terms of assembly, homotetramer. The cofactor is Mg(2+).

The protein resides in the cytoplasm. The enzyme catalyses beta-D-fructose 6-phosphate + ATP = beta-D-fructose 1,6-bisphosphate + ADP + H(+). Its pathway is carbohydrate degradation; glycolysis; D-glyceraldehyde 3-phosphate and glycerone phosphate from D-glucose: step 3/4. With respect to regulation, allosterically activated by ADP and other diphosphonucleosides, and allosterically inhibited by phosphoenolpyruvate. Functionally, catalyzes the phosphorylation of D-fructose 6-phosphate to fructose 1,6-bisphosphate by ATP, the first committing step of glycolysis. The sequence is that of ATP-dependent 6-phosphofructokinase from Mannheimia succiniciproducens (strain KCTC 0769BP / MBEL55E).